Consider the following 436-residue polypeptide: Gamma-glutamyl phosphate reductase (436 aa).

It belongs to the gamma-glutamyl phosphate reductase family.

It localises to the cytoplasm. It catalyses the reaction L-glutamate 5-semialdehyde + phosphate + NADP(+) = L-glutamyl 5-phosphate + NADPH + H(+). It participates in amino-acid biosynthesis; L-proline biosynthesis; L-glutamate 5-semialdehyde from L-glutamate: step 2/2. Functionally, catalyzes the NADPH-dependent reduction of L-glutamate 5-phosphate into L-glutamate 5-semialdehyde and phosphate. The product spontaneously undergoes cyclization to form 1-pyrroline-5-carboxylate. The polypeptide is Gamma-glutamyl phosphate reductase (Salinibacter ruber (strain DSM 13855 / M31)).